The chain runs to 371 residues: MAPRSFPENPYILLTPGPLSTSPTVKAVMMRDWCTWDRDYNAIVQDIRERLVALATAGAGYTSVLMQGSGTFAVEAALGTALPHDGKLLVISNGHYGDRMALIAGYLGMRSAKLDFGETGRPDPDRVRDTIESDPAITHVAVVHCETTTGMLNPVEEIGRAVKSLGRVFIVDAMSSFGGIPMDIATLGADFLISSANKCIQGVPGFGFVIARRSELEQCAGRSRSLSLDLFQQWKEMETKGGKWRFTSPTHVVRAFAQALNELDDEGGVACRNARYRENRRILTAGMRALGFECLLPEALQSPIITSFLTPGRPGFNFNSLYQELKSRGFVIYPGKVSEADTFRIGTIGHVFPEDMHRLVKAAKDAMHRFG.

At Lys-198 the chain carries N6-(pyridoxal phosphate)lysine.

Belongs to the class-V pyridoxal-phosphate-dependent aminotransferase family. PhnW subfamily. Homodimer. The cofactor is pyridoxal 5'-phosphate.

It catalyses the reaction (2-aminoethyl)phosphonate + pyruvate = phosphonoacetaldehyde + L-alanine. Its function is as follows. Involved in phosphonate degradation. The protein is 2-aminoethylphosphonate--pyruvate transaminase of Syntrophobacter fumaroxidans (strain DSM 10017 / MPOB).